Here is a 367-residue protein sequence, read N- to C-terminus: Small ribosomal subunit biogenesis GTPase RsgA (367 aa).

In terms of domain architecture, CP-type G spans 112–267 (AEQVLATNVD…VIDTPGLREL (156 aa)). GTP is bound by residues 157 to 160 (NKSD) and 209 to 217 (GSSGAGKST). Residues C291, C296, H298, and C304 each coordinate Zn(2+).

Belongs to the TRAFAC class YlqF/YawG GTPase family. RsgA subfamily. As to quaternary structure, monomer. Associates with 30S ribosomal subunit, binds 16S rRNA. Zn(2+) is required as a cofactor.

The protein resides in the cytoplasm. In terms of biological role, one of several proteins that assist in the late maturation steps of the functional core of the 30S ribosomal subunit. Helps release RbfA from mature subunits. May play a role in the assembly of ribosomal proteins into the subunit. Circularly permuted GTPase that catalyzes slow GTP hydrolysis, GTPase activity is stimulated by the 30S ribosomal subunit. The chain is Small ribosomal subunit biogenesis GTPase RsgA from Opitutus terrae (strain DSM 11246 / JCM 15787 / PB90-1).